A 288-amino-acid polypeptide reads, in one-letter code: Protoheme IX farnesyltransferase (288 aa).

Transmembrane regions (helical) follow at residues 8 to 28 (IIKP…FLLA), 35 to 55 (VNLF…ASIF), 75 to 95 (IAIG…LLIL), 105 to 125 (FLTI…YSLL), 130 to 150 (SVYS…IGYC), 161 to 181 (FILL…IGLV), 205 to 225 (INII…FFAG), 230 to 250 (NYLF…IKGF), and 265 to 285 (IFLF…IDYK).

The protein belongs to the UbiA prenyltransferase family. Protoheme IX farnesyltransferase subfamily.

The protein localises to the cell membrane. It carries out the reaction heme b + (2E,6E)-farnesyl diphosphate + H2O = Fe(II)-heme o + diphosphate. It functions in the pathway porphyrin-containing compound metabolism; heme O biosynthesis; heme O from protoheme: step 1/1. Functionally, converts heme B (protoheme IX) to heme O by substitution of the vinyl group on carbon 2 of heme B porphyrin ring with a hydroxyethyl farnesyl side group. The sequence is that of Protoheme IX farnesyltransferase from Wigglesworthia glossinidia brevipalpis.